Here is a 352-residue protein sequence, read N- to C-terminus: Potassium/proton antiporter CemA (352 aa).

The next 3 membrane-spanning stretches (helical) occupy residues 52–72, 227–247, and 312–332; these read VLVSLQCLLTLIIIPLFIHFF, IAALTNLFADLLTLFSLIILF, and IILLFVATFPVLLDSVIKYWI.

The protein belongs to the CemA family.

It localises to the plastid. Its subcellular location is the chloroplast inner membrane. The enzyme catalyses K(+)(in) + H(+)(out) = K(+)(out) + H(+)(in). In terms of biological role, contributes to K(+)/H(+) antiport activity by supporting proton efflux to control proton extrusion and homeostasis in chloroplasts in a light-dependent manner to modulate photosynthesis. Prevents excessive induction of non-photochemical quenching (NPQ) under continuous-light conditions. Indirectly promotes efficient inorganic carbon uptake into chloroplasts. The polypeptide is Potassium/proton antiporter CemA (Oltmannsiellopsis viridis (Marine flagellate)).